Consider the following 1135-residue polypeptide: Envelopment polyprotein (1135 aa).

A signal peptide spans 1–18; that stretch reads MIMWGLLLTMILIDFGAS. Topologically, residues 19–495 are lumenal; it reads LRNVYDMKIE…ALLTTFCFGW (477 aa). Intrachain disulfides connect Cys-29-Cys-151, Cys-63-Cys-157, Cys-109-Cys-128, Cys-133-Cys-138, Cys-175-Cys-185, Cys-210-Cys-247, Cys-234-Cys-351, Cys-376-Cys-435, Cys-380-Cys-389, Cys-405-Cys-424, and Cys-452-Cys-475. An N-linked (GlcNAc...) asparagine; by host glycan is attached at Asn-134. Asn-235 and Asn-347 each carry an N-linked (GlcNAc...) asparagine; by host glycan. Residue Asn-399 is glycosylated (N-linked (GlcNAc...) asparagine; by host). A helical transmembrane segment spans residues 496-516; it reads ILILSITLAVLVVLKFFAAIL. Positions 516-533 are binding to the ribonucleoprotein; that stretch reads LHNSSQENRFKIILRKIK. Over 517–627 the chain is Cytoplasmic; the sequence is HNSSQENRFK…LNLFRYKSRC (111 aa). 2 consecutive CCHC-type zinc fingers follow at residues 545–565 and 570–591; these read CEVC…NLSC and CPYC…YKVC. 3 binding to the ribonucleoprotein regions span residues 588–605, 592–603, and 611–625; these read YKVC…KKTI, QATHRFRDDLKK, and SPGC…RYKS. The ITAM domain maps to 611–634; the sequence is SPGCYRTLNLFRYKSRCYIFTVWV. Tyr-615 and Tyr-628 each carry phosphotyrosine. The short motif at 615–618 is the YxxL element; the sequence is YRTL. A helical transmembrane segment spans residues 628-648; the sequence is YIFTVWVTLLIIESIMWAASA. Topologically, residues 649–1105 are lumenal; that stretch reads SETVLEPSWN…EWITGIFNGN (457 aa). 8 disulfide bridges follow: Cys-735/Cys-770, Cys-739/Cys-777, Cys-751/Cys-885, Cys-765/Cys-896, Cys-780/Cys-904, Cys-806/Cys-815, Cys-823/Cys-832, and Cys-863/Cys-867. The segment at 757–777 is fusion loop; sequence FEYENNWGCNPADCPGIGTGC. An N-linked (GlcNAc...) asparagine; by host glycan is attached at Asn-928. Intrachain disulfides connect Cys-970–Cys-1000, Cys-993–Cys-1045, Cys-1010–Cys-1015, Cys-1046–Cys-1051, and Cys-1085–Cys-1089. A helical transmembrane segment spans residues 1106–1126; it reads WIVIVVLVFFFILSLILLSLL. The binding to the ribonucleoprotein stretch occupies residues 1122 to 1135; that stretch reads LLSLLCPIRKHKRS. Residues 1127–1135 are Cytoplasmic-facing; sequence CPIRKHKRS.

Belongs to the hantavirus envelope glycoprotein family. As to quaternary structure, homodimer. Homotetramer; forms heterotetrameric Gn-Gc spikes in the pre-fusion conformation. Interacts (via C-terminus) with the nucleoprotein. Interacts with host TUFM; this interaction contributes to the virus-induced degradation of mitochondria by autophagy, which leads to degradation of host MAVS and inhibition of type I interferon (IFN) responses. Interacts with host MAP1LC3B; this interaction contributes to the virus-induced degradation of mitochondria by autophagy, which leads to degradation of host MAVS and inhibition of type I interferon (IFN) responses. In terms of assembly, homodimer. Homotetramer; forms heterotetrameric Gn-Gc spikes in the pre-fusion conformation. Homotrimer; forms homotrimer in the post-fusion conformation at acidic pH. Interacts (via C-terminus) with the nucleoprotein. Envelope polyprotein precursor is quickly cleaved in vivo just after synthesis, presumably by host signal peptidase.

It localises to the virion membrane. Its subcellular location is the host cell surface. The protein localises to the host Golgi apparatus membrane. It is found in the host endoplasmic reticulum membrane. The protein resides in the host mitochondrion. In terms of biological role, forms homotetramers with glycoprotein C at the surface of the virion. Attaches the virion to host cell receptors including integrin ITGAV/ITGB3. This attachment induces virion internalization predominantly through clathrin-dependent endocytosis. Mediates the assembly and budding of infectious virus particles through its interaction with the nucleocapsid protein and the viral genome. May dysregulate normal immune and endothelial cell responses through an ITAM motif. Translocates to mitochondria, binds to host TUFM and recruits MAP1LC3B. These interactions induce mitochondrial autophagy and therefore destruction of host MAVS leading to inhibition of type I interferon (IFN) responses. Concomitant breakdown of glycoprotein N is apparently prevented by the nucleoprotein that may inhibit Gn-stimulated autophagosome-lysosome fusion. Interacts with the viral genomic RNA. Forms homotetramers with glycoprotein N at the surface of the virion. Attaches the virion to host cell receptors including integrin ITGAV/ITGB3. This attachment induces virion internalization predominantly through clathrin-dependent endocytosis. Class II fusion protein that promotes fusion of viral membrane with host endosomal membrane after endocytosis of the virion. In Dobrava-Belgrade orthohantavirus (DOBV), this protein is Envelopment polyprotein (GP).